A 546-amino-acid chain; its full sequence is CTP synthase (546 aa).

Residues 1–266 (MTTNYIFVTG…DDLVCTRFGI (266 aa)) are amidoligase domain. S14 lines the CTP pocket. S14 contacts UTP. Residues 15-20 (SLGKGI) and D72 each bind ATP. The Mg(2+) site is built by D72 and E140. CTP contacts are provided by residues 147-149 (DIE), 187-192 (KTKPTQ), and K223. Residues 187–192 (KTKPTQ) and K223 each bind UTP. 239–241 (KDV) is an ATP binding site. The region spanning 291–542 (TIGMVGKYIE…VKAAGQYSRG (252 aa)) is the Glutamine amidotransferase type-1 domain. G352 contacts L-glutamine. C379 acts as the Nucleophile; for glutamine hydrolysis in catalysis. Residues 380–383 (LGMQ), E403, and R470 each bind L-glutamine. Residues H515 and E517 contribute to the active site.

This sequence belongs to the CTP synthase family. As to quaternary structure, homotetramer.

The enzyme catalyses UTP + L-glutamine + ATP + H2O = CTP + L-glutamate + ADP + phosphate + 2 H(+). It carries out the reaction L-glutamine + H2O = L-glutamate + NH4(+). It catalyses the reaction UTP + NH4(+) + ATP = CTP + ADP + phosphate + 2 H(+). It functions in the pathway pyrimidine metabolism; CTP biosynthesis via de novo pathway; CTP from UDP: step 2/2. With respect to regulation, allosterically activated by GTP, when glutamine is the substrate; GTP has no effect on the reaction when ammonia is the substrate. The allosteric effector GTP functions by stabilizing the protein conformation that binds the tetrahedral intermediate(s) formed during glutamine hydrolysis. Inhibited by the product CTP, via allosteric rather than competitive inhibition. Functionally, catalyzes the ATP-dependent amination of UTP to CTP with either L-glutamine or ammonia as the source of nitrogen. Regulates intracellular CTP levels through interactions with the four ribonucleotide triphosphates. This Vibrio parahaemolyticus serotype O3:K6 (strain RIMD 2210633) protein is CTP synthase.